A 264-amino-acid chain; its full sequence is uncharacterized protein (264 aa).

This is an uncharacterized protein from Bacillus subtilis (strain 168).